Consider the following 410-residue polypeptide: Digeranylgeranylglycerophospholipid reductase (410 aa).

Positions 15, 34, 118, 286, 298, and 299 each coordinate FAD. A 2,3-bis-O-(geranylgeranyl)-sn-glycerol 1-phospholipid is bound by residues Lys343 and Ala379.

The protein belongs to the geranylgeranyl reductase family. DGGGPL reductase subfamily. Requires FAD as cofactor.

The catalysed reaction is a 2,3-bis-O-phytanyl-sn-glycerol 1-phospholipid + 8 A = a 2,3-bis-O-(geranylgeranyl)-sn-glycerol 1-phospholipid + 8 AH2. The enzyme catalyses 2,3-bis-O-(phytanyl)-sn-glycerol 1-phosphate + 8 A = 2,3-bis-O-(geranylgeranyl)-sn-glycerol 1-phosphate + 8 AH2. It catalyses the reaction CDP-2,3-bis-O-(geranylgeranyl)-sn-glycerol + 8 AH2 = CDP-2,3-bis-O-(phytanyl)-sn-glycerol + 8 A. It carries out the reaction archaetidylserine + 8 AH2 = 2,3-bis-O-phytanyl-sn-glycero-3-phospho-L-serine + 8 A. It participates in membrane lipid metabolism; glycerophospholipid metabolism. In terms of biological role, is involved in the reduction of 2,3-digeranylgeranylglycerophospholipids (unsaturated archaeols) into 2,3-diphytanylglycerophospholipids (saturated archaeols) in the biosynthesis of archaeal membrane lipids. Can fully reduce the unsaturated isoprenoid side chains of membrane phospholipids and glycolipids. Is also able to reduce the omega-position isoprene of dolichol phosphate. The polypeptide is Digeranylgeranylglycerophospholipid reductase (Haloferax volcanii (strain ATCC 29605 / DSM 3757 / JCM 8879 / NBRC 14742 / NCIMB 2012 / VKM B-1768 / DS2) (Halobacterium volcanii)).